The chain runs to 293 residues: 4-diphosphocytidyl-2-C-methyl-D-erythritol kinase (293 aa).

Lys16 is a catalytic residue. Residue 99–109 (PMGAGLGGGSS) coordinates ATP. Asp141 is a catalytic residue.

Belongs to the GHMP kinase family. IspE subfamily.

The enzyme catalyses 4-CDP-2-C-methyl-D-erythritol + ATP = 4-CDP-2-C-methyl-D-erythritol 2-phosphate + ADP + H(+). Its pathway is isoprenoid biosynthesis; isopentenyl diphosphate biosynthesis via DXP pathway; isopentenyl diphosphate from 1-deoxy-D-xylulose 5-phosphate: step 3/6. In terms of biological role, catalyzes the phosphorylation of the position 2 hydroxy group of 4-diphosphocytidyl-2C-methyl-D-erythritol. This chain is 4-diphosphocytidyl-2-C-methyl-D-erythritol kinase, found in Burkholderia ambifaria (strain MC40-6).